We begin with the raw amino-acid sequence, 93 residues long: NADH-ubiquinone oxidoreductase chain 4L (93 aa).

Transmembrane regions (helical) follow at residues 3–23 (LTIL…GPLG), 27–47 (IIKL…LIIL), and 55–75 (ILGL…SAIG).

Belongs to the complex I subunit 4L family.

It localises to the mitochondrion membrane. It carries out the reaction a ubiquinone + NADH + 5 H(+)(in) = a ubiquinol + NAD(+) + 4 H(+)(out). Functionally, core subunit of the mitochondrial membrane respiratory chain NADH dehydrogenase (Complex I) that is believed to belong to the minimal assembly required for catalysis. Complex I functions in the transfer of electrons from NADH to the respiratory chain. The immediate electron acceptor for the enzyme is believed to be ubiquinone. The sequence is that of NADH-ubiquinone oxidoreductase chain 4L (ND4L) from Wickerhamomyces canadensis (Yeast).